Consider the following 1005-residue polypeptide: uncharacterized protein (1005 aa).

Positions 1-24 (MKFQRKYWGLLSTLGVSSAVALSA) are cleaved as a signal peptide. Residue Cys25 is the site of N-palmitoyl cysteine attachment. Residue Cys25 is the site of S-diacylglycerol cysteine attachment. Disordered regions lie at residues 105-165 (KKDK…EEKF) and 786-825 (TQKI…WDDV). Low complexity-rich tracts occupy residues 110–131 (TSSQ…TSTS) and 145–156 (QSSSNGQNNQQS). Polar residues predominate over residues 786 to 801 (TQKIDQQNTASTTSDV).

It localises to the cell membrane. This is an uncharacterized protein from Mycoplasma pneumoniae (strain ATCC 29342 / M129 / Subtype 1) (Mycoplasmoides pneumoniae).